Here is a 491-residue protein sequence, read N- to C-terminus: Protein nucleotidyltransferase YdiU (491 aa).

ATP is bound by residues Gly-88, Gly-90, Arg-91, Lys-111, Asp-123, Gly-124, Arg-174, and Arg-181. Asp-250 serves as the catalytic Proton acceptor. Mg(2+) is bound by residues Asn-251 and Asp-260. Asp-260 contacts ATP.

This sequence belongs to the SELO family. It depends on Mg(2+) as a cofactor. The cofactor is Mn(2+).

The catalysed reaction is L-seryl-[protein] + ATP = 3-O-(5'-adenylyl)-L-seryl-[protein] + diphosphate. It carries out the reaction L-threonyl-[protein] + ATP = 3-O-(5'-adenylyl)-L-threonyl-[protein] + diphosphate. The enzyme catalyses L-tyrosyl-[protein] + ATP = O-(5'-adenylyl)-L-tyrosyl-[protein] + diphosphate. It catalyses the reaction L-histidyl-[protein] + UTP = N(tele)-(5'-uridylyl)-L-histidyl-[protein] + diphosphate. The catalysed reaction is L-seryl-[protein] + UTP = O-(5'-uridylyl)-L-seryl-[protein] + diphosphate. It carries out the reaction L-tyrosyl-[protein] + UTP = O-(5'-uridylyl)-L-tyrosyl-[protein] + diphosphate. Nucleotidyltransferase involved in the post-translational modification of proteins. It can catalyze the addition of adenosine monophosphate (AMP) or uridine monophosphate (UMP) to a protein, resulting in modifications known as AMPylation and UMPylation. The polypeptide is Protein nucleotidyltransferase YdiU (Bradyrhizobium sp. (strain BTAi1 / ATCC BAA-1182)).